Reading from the N-terminus, the 188-residue chain is Elongation factor P (188 aa).

It belongs to the elongation factor P family.

The protein localises to the cytoplasm. It functions in the pathway protein biosynthesis; polypeptide chain elongation. In terms of biological role, involved in peptide bond synthesis. Stimulates efficient translation and peptide-bond synthesis on native or reconstituted 70S ribosomes in vitro. Probably functions indirectly by altering the affinity of the ribosome for aminoacyl-tRNA, thus increasing their reactivity as acceptors for peptidyl transferase. In Mycoplasmoides gallisepticum (strain R(low / passage 15 / clone 2)) (Mycoplasma gallisepticum), this protein is Elongation factor P.